The sequence spans 741 residues: Protein O-mannosyl-transferase TMTC4 (741 aa).

At 1 to 10 (MVELDADLDH) the chain is on the cytoplasmic side. Residues 11–31 (IVPSVLPPFWAKLVVGFVSLL) form a helical membrane-spanning segment. The Extracellular portion of the chain corresponds to 32–110 (CFARSYDGDF…FHPVGFHVVN (79 aa)). The N-linked (GlcNAc...) asparagine glycan is linked to Asn-77. A helical transmembrane segment spans residues 111–131 (ILLHGSISILMLDVFSVLFGG). Residues 132 to 146 (LQYTGKGQRVHLAPR) are Cytoplasmic-facing. The next 2 membrane-spanning stretches (helical) occupy residues 147 to 166 (ASLL…ECVA) and 167 to 185 (GVVG…LSFL). Residues 186–198 (GYCQAFKETGNKE) are Cytoplasmic-facing. The chain crosses the membrane as a helical span at residues 199–219 (GTHSSTFWVLLSIFLGAVAML). The Extracellular segment spans residues 220-224 (CKEQG). A helical membrane pass occupies residues 225–245 (ITVLGLNAVFDILVIGKLDIL). Over 246 to 265 (AAVRKVLHKDKSQENAGMFK) the chain is Cytoplasmic. A helical membrane pass occupies residues 266–286 (NGGLLFRIALLTIGGTSMLYI). The Extracellular segment spans residues 287-354 (RWKIMGTGPP…PLIKSVGDWR (68 aa)). A helical transmembrane segment spans residues 355-375 (VIALAALWLCLIGLIFQALCS). Over 376–382 (EDSCKRR) the chain is Cytoplasmic. The chain crosses the membrane as a helical span at residues 383-403 (ILTLGLGFLVIPFLPASNLFF). The Extracellular portion of the chain corresponds to 404 to 412 (RVGFVVAER). The helical transmembrane segment at 413–433 (VLYLPSAGYCVLLTFGFGALS) threads the bilayer. Residues 434–441 (RHTKKKKP) lie on the Cytoplasmic side of the membrane. The chain crosses the membrane as a helical span at residues 442–462 (VAAIILGILLINALRCVIRSG). Residues 463 to 741 (EWRSEEQLFR…KLEQTQKKDV (279 aa)) are Extracellular-facing. 7 TPR repeats span residues 482–515 (AKVH…NPKY), 516–549 (VHAM…QPDF), 550–583 (AAAW…RRKY), 584–617 (PDCY…KPEH), 618–651 (SLAW…IPND), 652–685 (HSLM…NPNV), and 686–719 (ASYH…DPVA). N-linked (GlcNAc...) asparagine glycosylation occurs at Asn-497. Asn-609 is a glycosylation site (N-linked (GlcNAc...) asparagine). An N-linked (GlcNAc...) asparagine glycan is attached at Asn-725.

Belongs to the TMTC family.

It is found in the membrane. Its subcellular location is the endoplasmic reticulum. It carries out the reaction a di-trans,poly-cis-dolichyl beta-D-mannosyl phosphate + L-seryl-[protein] = 3-O-(alpha-D-mannosyl)-L-seryl-[protein] + a di-trans,poly-cis-dolichyl phosphate + H(+). The catalysed reaction is a di-trans,poly-cis-dolichyl beta-D-mannosyl phosphate + L-threonyl-[protein] = 3-O-(alpha-D-mannosyl)-L-threonyl-[protein] + a di-trans,poly-cis-dolichyl phosphate + H(+). It participates in protein modification; protein glycosylation. Its function is as follows. Transfers mannosyl residues to the hydroxyl group of serine or threonine residues. The 4 members of the TMTC family are O-mannosyl-transferases dedicated primarily to the cadherin superfamily, each member seems to have a distinct role in decorating the cadherin domains with O-linked mannose glycans at specific regions. Also acts as O-mannosyl-transferase on other proteins such as PDIA3. This is Protein O-mannosyl-transferase TMTC4 from Mus musculus (Mouse).